Consider the following 456-residue polypeptide: O-phospho-L-seryl-tRNA:Cys-tRNA synthase 2 (456 aa).

Pyridoxal 5'-phosphate is bound by residues 146 to 147, N251, and 274 to 276; these read AR and SGH. An N6-(pyridoxal phosphate)lysine modification is found at K277.

Belongs to the SepCysS family. As to quaternary structure, homodimer. Interacts with SepRS. The cofactor is pyridoxal 5'-phosphate.

It carries out the reaction O-phospho-L-seryl-tRNA(Cys) + hydrogen sulfide + H(+) = L-cysteinyl-tRNA(Cys) + phosphate. Converts O-phospho-L-seryl-tRNA(Cys) (Sep-tRNA(Cys)) to L-cysteinyl-tRNA(Cys) (Cys-tRNA(Cys)). The polypeptide is O-phospho-L-seryl-tRNA:Cys-tRNA synthase 2 (Methanospirillum hungatei JF-1 (strain ATCC 27890 / DSM 864 / NBRC 100397 / JF-1)).